Reading from the N-terminus, the 503-residue chain is Maturase K (503 aa).

It belongs to the intron maturase 2 family. MatK subfamily.

It is found in the plastid. The protein resides in the chloroplast. Usually encoded in the trnK tRNA gene intron. Probably assists in splicing its own and other chloroplast group II introns. The polypeptide is Maturase K (Callistemon polandii (Gold-tipped bottlebrush)).